The chain runs to 159 residues: 2-C-methyl-D-erythritol 2,4-cyclodiphosphate synthase (159 aa).

A divalent metal cation-binding residues include D8 and H10. 4-CDP-2-C-methyl-D-erythritol 2-phosphate is bound by residues 8 to 10 and 34 to 35; these read DVH and HS. Residue H42 coordinates a divalent metal cation. Residues 56-58, 61-65, 100-106, 132-135, F139, and R142 each bind 4-CDP-2-C-methyl-D-erythritol 2-phosphate; these read DIG, FPDTD, AQAPRML, and TTTE.

This sequence belongs to the IspF family. As to quaternary structure, homotrimer. A divalent metal cation is required as a cofactor.

It carries out the reaction 4-CDP-2-C-methyl-D-erythritol 2-phosphate = 2-C-methyl-D-erythritol 2,4-cyclic diphosphate + CMP. It participates in isoprenoid biosynthesis; isopentenyl diphosphate biosynthesis via DXP pathway; isopentenyl diphosphate from 1-deoxy-D-xylulose 5-phosphate: step 4/6. Involved in the biosynthesis of isopentenyl diphosphate (IPP) and dimethylallyl diphosphate (DMAPP), two major building blocks of isoprenoid compounds. Catalyzes the conversion of 4-diphosphocytidyl-2-C-methyl-D-erythritol 2-phosphate (CDP-ME2P) to 2-C-methyl-D-erythritol 2,4-cyclodiphosphate (ME-CPP) with a corresponding release of cytidine 5-monophosphate (CMP). This chain is 2-C-methyl-D-erythritol 2,4-cyclodiphosphate synthase, found in Escherichia coli O45:K1 (strain S88 / ExPEC).